The primary structure comprises 187 residues: Photosystem I assembly protein Ycf4 (187 aa).

2 helical membrane-spanning segments follow: residues 25 to 47 (YWWA…SSYL) and 62 to 84 (FVPQ…IYLW).

The protein belongs to the Ycf4 family.

The protein resides in the plastid. Its subcellular location is the chloroplast thylakoid membrane. In terms of biological role, seems to be required for the assembly of the photosystem I complex. The polypeptide is Photosystem I assembly protein Ycf4 (Mesostigma viride (Green alga)).